A 292-amino-acid polypeptide reads, in one-letter code: 4-hydroxy-tetrahydrodipicolinate synthase (292 aa).

Thr-45 provides a ligand contact to pyruvate. The active-site Proton donor/acceptor is Tyr-133. The active-site Schiff-base intermediate with substrate is Lys-161. Ile-203 serves as a coordination point for pyruvate.

Belongs to the DapA family. Homotetramer; dimer of dimers.

Its subcellular location is the cytoplasm. The catalysed reaction is L-aspartate 4-semialdehyde + pyruvate = (2S,4S)-4-hydroxy-2,3,4,5-tetrahydrodipicolinate + H2O + H(+). Its pathway is amino-acid biosynthesis; L-lysine biosynthesis via DAP pathway; (S)-tetrahydrodipicolinate from L-aspartate: step 3/4. Catalyzes the condensation of (S)-aspartate-beta-semialdehyde [(S)-ASA] and pyruvate to 4-hydroxy-tetrahydrodipicolinate (HTPA). The chain is 4-hydroxy-tetrahydrodipicolinate synthase from Vibrio cholerae serotype O1 (strain M66-2).